A 212-amino-acid chain; its full sequence is Protein-L-isoaspartate O-methyltransferase (212 aa).

Ser56 is a catalytic residue.

The protein belongs to the methyltransferase superfamily. L-isoaspartyl/D-aspartyl protein methyltransferase family.

It localises to the cytoplasm. The enzyme catalyses [protein]-L-isoaspartate + S-adenosyl-L-methionine = [protein]-L-isoaspartate alpha-methyl ester + S-adenosyl-L-homocysteine. Functionally, catalyzes the methyl esterification of L-isoaspartyl residues in peptides and proteins that result from spontaneous decomposition of normal L-aspartyl and L-asparaginyl residues. It plays a role in the repair and/or degradation of damaged proteins. This Myxococcus xanthus (strain DK1622) protein is Protein-L-isoaspartate O-methyltransferase.